Consider the following 447-residue polypeptide: Methylenetetrahydrofolate--tRNA-(uracil-5-)-methyltransferase TrmFO (447 aa).

FAD is bound at residue 10 to 15 (GAGLAG).

The protein belongs to the MnmG family. TrmFO subfamily. The cofactor is FAD.

The protein localises to the cytoplasm. It carries out the reaction uridine(54) in tRNA + (6R)-5,10-methylene-5,6,7,8-tetrahydrofolate + NADH + H(+) = 5-methyluridine(54) in tRNA + (6S)-5,6,7,8-tetrahydrofolate + NAD(+). It catalyses the reaction uridine(54) in tRNA + (6R)-5,10-methylene-5,6,7,8-tetrahydrofolate + NADPH + H(+) = 5-methyluridine(54) in tRNA + (6S)-5,6,7,8-tetrahydrofolate + NADP(+). In terms of biological role, catalyzes the folate-dependent formation of 5-methyl-uridine at position 54 (M-5-U54) in all tRNAs. This Symbiobacterium thermophilum (strain DSM 24528 / JCM 14929 / IAM 14863 / T) protein is Methylenetetrahydrofolate--tRNA-(uracil-5-)-methyltransferase TrmFO.